The following is a 400-amino-acid chain: Cytoplasmic tRNA 2-thiolation protein 2 (400 aa).

This sequence belongs to the CTU2/NCS2 family.

The protein resides in the cytoplasm. It functions in the pathway tRNA modification; 5-methoxycarbonylmethyl-2-thiouridine-tRNA biosynthesis. Functionally, plays a central role in 2-thiolation of mcm(5)S(2)U at tRNA wobble positions of tRNA(Lys), tRNA(Glu) and tRNA(Gln). May act by forming a heterodimer with NCS6/CTU1 that ligates sulfur from thiocarboxylated URM1 onto the uridine of tRNAs at wobble position. The sequence is that of Cytoplasmic tRNA 2-thiolation protein 2 from Drosophila virilis (Fruit fly).